Here is a 297-residue protein sequence, read N- to C-terminus: Acetylglutamate kinase (297 aa).

Substrate contacts are provided by residues 70–71 (GG), arginine 92, and asparagine 194.

It belongs to the acetylglutamate kinase family. ArgB subfamily.

It is found in the cytoplasm. It carries out the reaction N-acetyl-L-glutamate + ATP = N-acetyl-L-glutamyl 5-phosphate + ADP. The protein operates within amino-acid biosynthesis; L-arginine biosynthesis; N(2)-acetyl-L-ornithine from L-glutamate: step 2/4. In terms of biological role, catalyzes the ATP-dependent phosphorylation of N-acetyl-L-glutamate. This Herminiimonas arsenicoxydans protein is Acetylglutamate kinase.